Reading from the N-terminus, the 682-residue chain is Glutamine--fructose-6-phosphate aminotransferase [isomerizing] 2 (682 aa).

C2 acts as the For GATase activity in catalysis. The Glutamine amidotransferase type-2 domain maps to 2 to 288; the sequence is CGIFAYMNYR…DDDIAAVADG (287 aa). S244 is subject to Phosphoserine. SIS domains follow at residues 360 to 499 and 531 to 672; these read HLKE…DRIS and LALE…VDFP. Substrate is bound by residues 377 to 378, 422 to 424, T427, and H578; these read TS and SQS.

It carries out the reaction D-fructose 6-phosphate + L-glutamine = D-glucosamine 6-phosphate + L-glutamate. Its pathway is nucleotide-sugar biosynthesis; UDP-N-acetyl-alpha-D-glucosamine biosynthesis; alpha-D-glucosamine 6-phosphate from D-fructose 6-phosphate: step 1/1. Its function is as follows. Controls the flux of glucose into the hexosamine pathway. Most likely involved in regulating the availability of precursors for N- and O-linked glycosylation of proteins. This chain is Glutamine--fructose-6-phosphate aminotransferase [isomerizing] 2 (Gfpt2), found in Mus musculus (Mouse).